A 249-amino-acid chain; its full sequence is DNA polymerase sliding clamp (249 aa).

Belongs to the PCNA family. In terms of assembly, homotrimer which circularizes head-to-tail (head is a N-terminus, tail is at C-terminus) to form a toroid. RFC opens the toroid so it can load on DNA. Interacts with both Pol I (pol) and Pol II (polB-polC), with Hel308 (hjm) and with Hjc. Interaction with the C-terminal PIP-box of RfcL may stabilize the toroidal structure.

In terms of biological role, sliding clamp subunit that acts as a moving platform for DNA processing. Responsible for tethering the catalytic subunit of DNA polymerase to DNA during high-speed replication. Unlike its eukaryotic paralog, loads on circular DNA without the replication factor C (RFC) clamp loader, although RFC greatly increases loading efficiency. Stimulates the ATPase activity of replication factor C (RFC) in the presence of ssDNA. Stimulates the helicase activity of Hel308 and may alter its substrate specificity. The polypeptide is DNA polymerase sliding clamp (Pyrococcus furiosus (strain ATCC 43587 / DSM 3638 / JCM 8422 / Vc1)).